The following is a 357-amino-acid chain: DNA replication and repair protein RecF (357 aa).

30-37 (GANGSGKT) provides a ligand contact to ATP.

This sequence belongs to the RecF family.

The protein resides in the cytoplasm. The RecF protein is involved in DNA metabolism; it is required for DNA replication and normal SOS inducibility. RecF binds preferentially to single-stranded, linear DNA. It also seems to bind ATP. The protein is DNA replication and repair protein RecF of Shigella flexneri serotype 5b (strain 8401).